A 1334-amino-acid chain; its full sequence is Aldehyde oxidase 4 (1334 aa).

Positions 6 to 93 (DELIFFVNGK…GAAVTTVEGV (88 aa)) constitute a 2Fe-2S ferredoxin-type domain. Positions 45, 50, 53, and 75 each coordinate [2Fe-2S] cluster. Glutamine 114 contributes to the Mo-molybdopterin binding site. Positions 115, 118, 150, and 152 each coordinate [2Fe-2S] cluster. Residue cysteine 152 participates in Mo-molybdopterin binding. An FAD-binding PCMH-type domain is found at 235–421 (FQGERTIWIM…LSVFIPYSGQ (187 aa)). FAD-binding positions include 263–270 (LVMGNTAV), alanine 345, threonine 354, histidine 358, aspartate 367, and alanine 411. Residues alanine 802, 802–803 (AF), leucine 1043, 1084–1087 (GSMG), glutamine 1199, and leucine 1263 contribute to the Mo-molybdopterin site. Catalysis depends on glutamate 1265, which acts as the Proton acceptor; for azaheterocycle hydroxylase activity.

This sequence belongs to the xanthine dehydrogenase family. As to quaternary structure, homodimer. [2Fe-2S] cluster is required as a cofactor. Requires FAD as cofactor. Mo-molybdopterin serves as cofactor.

The protein resides in the cytoplasm. It carries out the reaction an aldehyde + O2 + H2O = a carboxylate + H2O2 + H(+). The enzyme catalyses retinal + O2 + H2O = retinoate + H2O2 + H(+). Aldehyde oxidase able to catalyze the oxidation of retinaldehyde into retinoate. Acts as a negative modulator of the epidermal trophism. May be able to oxidize a wide variety of aldehydes into their corresponding carboxylates and to hydroxylate azaheterocycles. The protein is Aldehyde oxidase 4 (Aox4) of Rattus norvegicus (Rat).